Consider the following 322-residue polypeptide: MADVLTELPGVGPSTAEKLIEAGYLDFMKIATATIGELTDIEGISEKAAAKMIMAARDLCDLGFKSGVELLRQRQSVWRLSTGSKELDTVLAGGLESQSVTEFAGMYGSGKTQIMHQSCVNLQIAGKIYADLEGVVEEELEHPKAVYIDTEGTFRPERVVQMAEGLGIDGQLVLDNTFVARAYNSDMQMLFAEKIEDLIKGGNNIKLVIIDSLTSTFRNEFTGRGKLAERQQKLGRHMATLNKLADLYNCIVLVTNQVAAKPDAFFGVAEQAIGGHVVGHAATFRFFLRKSKGDKRVAKLYDSPHLPDSEAVFRITEKGIMD.

Gly105–Thr112 contacts ATP.

It belongs to the eukaryotic RecA-like protein family.

In terms of biological role, involved in DNA repair and in homologous recombination. Binds and assemble on single-stranded DNA to form a nucleoprotein filament. Hydrolyzes ATP in a ssDNA-dependent manner and promotes DNA strand exchange between homologous DNA molecules. The chain is DNA repair and recombination protein RadA from Methanococcus maripaludis (strain C7 / ATCC BAA-1331).